A 107-amino-acid chain; its full sequence is MLNAFAFPQTNECFPAKRGFCANERTKCLNPKMPSKSMFGGSVSENLFLSKIRIGLSFPLPLSEIKLQNQDFRLEGQMSSFDPFVDESKALVRRLGQKVKAKSFLCR.

Its subcellular location is the mitochondrion. This is an uncharacterized protein from Arabidopsis thaliana (Mouse-ear cress).